A 530-amino-acid chain; its full sequence is UDP-glucuronosyltransferase 1A8 (530 aa).

The N-terminal stretch at 1–25 (MARTGWTSPIPLCVSLLLTCGFAEA) is a signal peptide. N-linked (GlcNAc...) asparagine glycosylation is found at N71, N292, and N344. A helical membrane pass occupies residues 488–504 (VIGFLLAVVLTVAFITF).

This sequence belongs to the UDP-glycosyltransferase family. In terms of assembly, homodimer. Homooligomer. Interacts with UGT1A1, UGT1A3, UGT1A4, UGT1A6, UGT1A7, UGT1A9 and UGT1A10 to form heterodimers. Isoform 1 interacts with isoform 2/i2 suggesting that oligomerization is involved in negative regulation of transferase activity by isoform 2. Isoform 1 also interacts with respective i2 isoforms of UGT1A1, UGT1A3, UGT1A4, UGT1A6, UGT1A7, UGT1A9 and UGT1A10. As to expression, expressed in kidney, colon and small intestine. Not expressed in liver. In terms of tissue distribution, expressed in liver, kidney, colon and small intestine.

The protein localises to the endoplasmic reticulum membrane. The catalysed reaction is glucuronate acceptor + UDP-alpha-D-glucuronate = acceptor beta-D-glucuronoside + UDP + H(+). The enzyme catalyses 17beta-estradiol + UDP-alpha-D-glucuronate = 17beta-estradiol 3-O-(beta-D-glucuronate) + UDP + H(+). It carries out the reaction 17alpha-estradiol + UDP-alpha-D-glucuronate = 17alpha-estradiol 3-O-(beta-D-glucuronate) + UDP + H(+). It catalyses the reaction estrone + UDP-alpha-D-glucuronate = estrone 3-O-(beta-D-glucuronate) + UDP + H(+). The catalysed reaction is 16alpha,17alpha-estriol + UDP-alpha-D-glucuronate = 16alpha,17alpha-estriol 3-O-(beta-D-glucuronate) + UDP + H(+). The enzyme catalyses 2-hydroxy-17beta-estradiol + UDP-alpha-D-glucuronate = 2-hydroxy-17beta-estradiol 3-O-(beta-D-glucuronate) + UDP + H(+). It carries out the reaction 2-hydroxy-17beta-estradiol + UDP-alpha-D-glucuronate = 17beta-estradiol 2-O-(beta-D-glucuronate) + UDP + H(+). It catalyses the reaction 2-hydroxyestrone + UDP-alpha-D-glucuronate = 2-hydroxyestrone 3-O-(beta-D-glucuronate) + UDP + H(+). The catalysed reaction is 4-hydroxy-17beta-estradiol + UDP-alpha-D-glucuronate = 4-hydroxy-17beta-estradiol 3-O-(beta-D-glucuronate) + UDP + H(+). The enzyme catalyses 4-hydroxy-17beta-estradiol + UDP-alpha-D-glucuronate = 17beta-estradiol 4-O-(beta-D-glucuronate) + UDP + H(+). It carries out the reaction 4-hydroxyestrone + UDP-alpha-D-glucuronate = 4-hydroxyestrone 3-O-(beta-D-glucuronate) + UDP + H(+). It catalyses the reaction 4-hydroxyestrone + UDP-alpha-D-glucuronate = estrone 4-O-(beta-D-glucuronate) + UDP + H(+). The catalysed reaction is 2-methoxy-17beta-estradiol + UDP-alpha-D-glucuronate = 2-methoxy-17beta-estradiol 3-O-(beta-D-glucuronate) + UDP + H(+). The enzyme catalyses 2-methoxyestrone + UDP-alpha-D-glucuronate = 2-methoxyestrone 3-O-(beta-D-glucuronate) + UDP + H(+). It carries out the reaction 4-methoxy-17beta-estradiol + UDP-alpha-D-glucuronate = 4-methoxy-17beta-estradiol 3-O-(beta-D-glucuronate) + UDP + H(+). It catalyses the reaction 4-methoxyestrone + UDP-alpha-D-glucuronate = 4-methoxyestrone 3-O-(beta-D-glucuronate) + UDP + H(+). The catalysed reaction is 17beta-hydroxy-5alpha-androstan-3-one + UDP-alpha-D-glucuronate = 5alpha-dihydrotestosterone 17-O-(beta-D-glucuronate) + UDP + H(+). The enzyme catalyses 5alpha-dihydrotestosterone 17-O-(beta-D-glucuronate) + UDP-alpha-D-glucuronate = 5alpha-dihydrotestosterone 17-O-[beta-D-glucuronosyl-(1-&gt;2)-glucuronate] + UDP + H(+). It carries out the reaction prunetin + UDP-alpha-D-glucuronate = prunetin-4'-O-beta-D-glucuronide + UDP. It catalyses the reaction prunetin + UDP-alpha-D-glucuronate = prunetin-5-O-beta-D-glucuronide + UDP. The catalysed reaction is candesartan + UDP-alpha-D-glucuronate = candesartan O-beta-D-glucuronoside + UDP. The enzyme catalyses mycophenolate + UDP-alpha-D-glucuronate = mycophenolate 7-O-beta-D-glucuronide + UDP + H(+). It carries out the reaction (E)-ferulate + UDP-alpha-D-glucuronate = (E)-4-O-(beta-D-glucuronosyl)-ferulate + UDP + H(+). It catalyses the reaction (E)-ferulate + UDP-alpha-D-glucuronate = (E)-ferulic acid beta-D-glucuronate ester + UDP. UDP-glucuronosyltransferase (UGT) that catalyzes phase II biotransformation reactions in which lipophilic substrates are conjugated with glucuronic acid to increase the metabolite's water solubility, thereby facilitating excretion into either the urine or bile. Essential for the elimination and detoxification of drugs, xenobiotics and endogenous compounds. Catalyzes the glucuronidation of endogenous steroid hormones such as androgens and estrogens. Produces dihydrotestosterone (DHT) diglucuronide from the DHT after two subsequent glucoronidation steps. Involved in the glucuronidation of the phytochemical ferulic acid at the phenolic or the carboxylic acid group. Also catalyzes the glucuronidation of the isoflavones genistein, daidzein, glycitein, formononetin, biochanin A and prunetin, which are phytoestrogens with anticancer and cardiovascular properties. Involved in the glucuronidation of the AGTR1 angiotensin receptor antagonist caderastan, a drug which can inhibit the effect of angiotensin II. Also metabolizes mycophenolate, an immunosuppressive agent. Functionally, lacks UGT glucuronidation activity but acts as a negative regulator of isoform 1. This is UDP-glucuronosyltransferase 1A8 from Homo sapiens (Human).